Reading from the N-terminus, the 469-residue chain is Neuraminidase (469 aa).

At 1–6 (MNPNQK) the chain is on the intravirion side. Residues 7 to 29 (TITIGSVSLTIATVCFLMQIAIL) form a helical membrane-spanning segment. The segment at 11 to 33 (GSVSLTIATVCFLMQIAILATTV) is involved in apical transport and lipid raft association. Over 30 to 469 (ATTVTLHFKQ…DGANINFMPI (440 aa)) the chain is Virion surface. Residues 36–88 (HFKQHECDSPASNQVMPCEPIIIERNITEIVYLNNTTIEKEICPEVVEYRNWS) form a hypervariable stalk region region. 4 N-linked (GlcNAc...) asparagine; by host glycosylation sites follow: Asn61, Asn69, Asn70, and Asn86. The tract at residues 91-469 (QCQITGFAPF…DGANINFMPI (379 aa)) is head of neuraminidase. 8 disulfides stabilise this stretch: Cys92–Cys417, Cys124–Cys129, Cys183–Cys230, Cys232–Cys237, Cys278–Cys291, Cys280–Cys289, Cys318–Cys337, and Cys421–Cys447. A substrate-binding site is contributed by Arg118. The N-linked (GlcNAc...) asparagine; by host glycan is linked to Asn146. The active-site Proton donor/acceptor is Asp151. Arg152 contributes to the substrate binding site. N-linked (GlcNAc...) asparagine; by host glycosylation is found at Asn200 and Asn234. 276–277 (EE) serves as a coordination point for substrate. Arg292 is a binding site for substrate. Residues Asp293, Gly297, and Asp324 each coordinate Ca(2+). Residues 325-349 (TPRNDDSSSNSNCRDPNNERGNPGV) are disordered. Arg371 contributes to the substrate binding site. Asn402 is a glycosylation site (N-linked (GlcNAc...) asparagine; by host). Residue Tyr406 is the Nucleophile of the active site.

Belongs to the glycosyl hydrolase 34 family. In terms of assembly, homotetramer. Ca(2+) serves as cofactor. N-glycosylated.

The protein localises to the virion membrane. The protein resides in the host apical cell membrane. The enzyme catalyses Hydrolysis of alpha-(2-&gt;3)-, alpha-(2-&gt;6)-, alpha-(2-&gt;8)- glycosidic linkages of terminal sialic acid residues in oligosaccharides, glycoproteins, glycolipids, colominic acid and synthetic substrates.. Inhibited by the neuraminidase inhibitors zanamivir (Relenza) and oseltamivir (Tamiflu). These drugs interfere with the release of progeny virus from infected cells and are effective against all influenza strains. Resistance to neuraminidase inhibitors is quite rare. In terms of biological role, catalyzes the removal of terminal sialic acid residues from viral and cellular glycoconjugates. Cleaves off the terminal sialic acids on the glycosylated HA during virus budding to facilitate virus release. Additionally helps virus spread through the circulation by further removing sialic acids from the cell surface. These cleavages prevent self-aggregation and ensure the efficient spread of the progeny virus from cell to cell. Otherwise, infection would be limited to one round of replication. Described as a receptor-destroying enzyme because it cleaves a terminal sialic acid from the cellular receptors. May facilitate viral invasion of the upper airways by cleaving the sialic acid moieties on the mucin of the airway epithelial cells. Likely to plays a role in the budding process through its association with lipid rafts during intracellular transport. May additionally display a raft-association independent effect on budding. Plays a role in the determination of host range restriction on replication and virulence. Sialidase activity in late endosome/lysosome traffic seems to enhance virus replication. The chain is Neuraminidase from Influenza A virus (strain A/RI/5-/1957 H2N2).